Reading from the N-terminus, the 1024-residue chain is Protein translocase subunit SecA (1024 aa).

ATP is bound by residues Gln-143, 161–165, and Asp-661; that span reads GEGKT. The interval 970–1024 is disordered; sequence HKAAESVYTASSDEPETNQEESPQQPAIAEKKPGRNDLCPCGSGKKYKNCHGQQP. Zn(2+)-binding residues include Cys-1008, Cys-1010, Cys-1019, and His-1020.

This sequence belongs to the SecA family. Monomer and homodimer. Part of the essential Sec protein translocation apparatus which comprises SecA, SecYEG and auxiliary proteins SecDF. Other proteins may also be involved. The cofactor is Zn(2+).

The protein resides in the cell inner membrane. It is found in the cytoplasm. It catalyses the reaction ATP + H2O + cellular proteinSide 1 = ADP + phosphate + cellular proteinSide 2.. Part of the Sec protein translocase complex. Interacts with the SecYEG preprotein conducting channel. Has a central role in coupling the hydrolysis of ATP to the transfer of proteins into and across the cell membrane, serving as an ATP-driven molecular motor driving the stepwise translocation of polypeptide chains across the membrane. The sequence is that of Protein translocase subunit SecA from Pelodictyon phaeoclathratiforme (strain DSM 5477 / BU-1).